The sequence spans 217 residues: Vesicle-associated membrane protein 723 (217 aa).

The Cytoplasmic segment spans residues 1-192 (MAQQSLFYSF…KWFQNMKIKL (192 aa)). In terms of domain architecture, Longin spans 10-114 (FIARGTVILV…SLNKEFGSNL (105 aa)). The v-SNARE coiled-coil homology domain occupies 130–186 (NLAKAKAQVSEVKSLMMENIEKVLARGVICEMLGSSESQPQAFYIKRTQMKRKKWFQ). The helical; Anchor for type IV membrane protein transmembrane segment at 193–213 (IVLAIIIALILIIILSVCGGF) threads the bilayer. The Vesicular segment spans residues 214 to 217 (NCGK).

This sequence belongs to the synaptobrevin family. In terms of tissue distribution, highly expressed in stems and roots. Detected in flowers and leaves.

It is found in the endoplasmic reticulum membrane. Functionally, involved in the targeting and/or fusion of transport vesicles to their target membrane. In Arabidopsis thaliana (Mouse-ear cress), this protein is Vesicle-associated membrane protein 723.